A 258-amino-acid polypeptide reads, in one-letter code: Pro-thyrotropin-releasing hormone-A (258 aa).

An N-terminal signal peptide occupies residues 1–22 (MKSACLIILASLVVCNLTLARG). A Pyrrolidone carboxylic acid modification is found at Gln-78. A Proline amide modification is found at Pro-80. Composition is skewed to basic and acidic residues over residues 84–98 (YQEE…GKRE) and 107–119 (EVQK…KRED). Residues 84-124 (YQEELEKRQHPGKREEDEDEDYDEVQKRQHPGKREDEFDSF) are disordered. Pyrrolidone carboxylic acid is present on Gln-92. Pro-94 bears the Proline amide mark. Gln-112 bears the Pyrrolidone carboxylic acid mark. A Proline amide modification is found at Pro-114. A Pyrrolidone carboxylic acid modification is found at Gln-131. Proline amide is present on Pro-133. The residue at position 156 (Gln-156) is a Pyrrolidone carboxylic acid. At Pro-158 the chain carries Proline amide. Disordered stretches follow at residues 166–215 (YSKR…PCDV) and 236–258 (SRAE…TEQE). Residue Gln-170 is modified to Pyrrolidone carboxylic acid. A Proline amide modification is found at Pro-172. Over residues 184–193 (GDLRELEKRQ) the composition is skewed to basic and acidic residues. Gln-193 carries the pyrrolidone carboxylic acid modification. Pro-195 carries the post-translational modification Proline amide. Gln-242 carries the post-translational modification Pyrrolidone carboxylic acid. Proline amide is present on Pro-244.

It belongs to the TRH family.

It localises to the secreted. Functionally, functions as a regulator of the biosynthesis of TSH in the anterior pituitary gland and as a neurotransmitter/ neuromodulator in the central and peripheral nervous systems. In Oncorhynchus nerka (Sockeye salmon), this protein is Pro-thyrotropin-releasing hormone-A (trha).